A 368-amino-acid chain; its full sequence is E3 ubiquitin-protein ligase E3D (368 aa).

Alanine 2 carries the post-translational modification N-acetylalanine. The BRAT1-like motif motif lies at proline 129–asparagine 159. Cysteine 144 provides a ligand contact to Zn(2+). Residues arginine 214 to cysteine 236 form an interaction with UBE2C region. The HECT-like stretch occupies residues leucine 332–methionine 368.

As to quaternary structure, interacts with UBE2C/UbcH10 (E2 ubiquitin-conjugating enzyme). In vitro, interacts with cyclin-B. Ubiquitinated by UBCH10 (E2 ubiquitin-conjugating enzyme).

The protein resides in the cytoplasm. The catalysed reaction is S-ubiquitinyl-[E2 ubiquitin-conjugating enzyme]-L-cysteine + [acceptor protein]-L-lysine = [E2 ubiquitin-conjugating enzyme]-L-cysteine + N(6)-ubiquitinyl-[acceptor protein]-L-lysine.. Its pathway is protein modification; protein ubiquitination. E3 ubiquitin-protein ligase which accepts ubiquitin from specific E2 ubiquitin-conjugating enzymes, and transfers it to substrates, generally promoting their degradation by the proteasome. Independently of its E3 ubiquitin-protein ligase activity, acts as an inhibitor of CPSF3 endonuclease activity by blocking CPSF3 active site. This is E3 ubiquitin-protein ligase E3D (Ube3d) from Mus musculus (Mouse).